The primary structure comprises 83 residues: uncharacterized protein (83 aa).

This is an uncharacterized protein from Lactuca sativa (Garden lettuce).